The sequence spans 215 residues: MQEVKAFNEKRAEIYWWFSSLFAKELSEKELETYHSVEIRSFLAGLGENESLKPAVDSLVDALNRLQDRNDAQLELAADFCELFLKTDKYGALPYASMYIGESGLLNDKPAEEMEKLMADFGVQVDENLKEPADHLAVELDFLGNMIIRSNELEQEKHMEEAFVKQNDFIQNQLMSWLPKFAEKCKQFDEFGFYLSVAQLLIAFCKLDSAYLLGE.

This sequence belongs to the TorD/DmsD family. TorD subfamily.

Its subcellular location is the cytoplasm. In terms of biological role, involved in the biogenesis of TorA. Acts on TorA before the insertion of the molybdenum cofactor and, as a result, probably favors a conformation of the apoenzyme that is competent for acquiring the cofactor. This chain is Chaperone protein TorD, found in Vibrio parahaemolyticus serotype O3:K6 (strain RIMD 2210633).